The following is a 353-amino-acid chain: MTAILERRESTSLWGRFCNWITSTENRLYIGWFGVLMIPTLLTATSVFIIAFIAAPPVDIDGIREPVSGSLLYGNNIISGAIIPTSAAIGLHFYPIWEAASVDEWLYNGGPYELIVLHFLLGVACYMGREWELSFRLGMRPWIAVAYSAPVAAATAVFLIYPIGQGSFSDGMPLGISGTFNFMIVFQAEHNILMHPFHMLGVAGVFGGSLFSAMHGSLVTSSLIRETTENESANEGYKFGQEEETYNIVAAHGYFGRLIFQYASFNNSRSLHFFLAAWPVVGIWFTALGISTMAFNLNGFNFNQSVVDSQGRVINTWADIINRANLGMEVMHERNAHNFPLDLAALEVPSLNG.

Thr-2 carries the post-translational modification N-acetylthreonine. A Phosphothreonine modification is found at Thr-2. The next 3 membrane-spanning stretches (helical) occupy residues 29-46 (YIGW…TATS), 118-133 (HFLL…EWEL), and 142-156 (WIAV…AATA). His-118 contacts chlorophyll a. Tyr-126 is a binding site for pheophytin a. [CaMn4O5] cluster contacts are provided by Asp-170 and Glu-189. The chain crosses the membrane as a helical span at residues 197–218 (FHMLGVAGVFGGSLFSAMHGSL). Position 198 (His-198) interacts with chlorophyll a. A quinone contacts are provided by residues His-215 and 264-265 (SF). His-215 contacts Fe cation. Position 272 (His-272) interacts with Fe cation. Residues 274–288 (FLAAWPVVGIWFTAL) form a helical membrane-spanning segment. [CaMn4O5] cluster-binding residues include His-332, Glu-333, Asp-342, and Ala-344. A propeptide spanning residues 345 to 353 (ALEVPSLNG) is cleaved from the precursor.

This sequence belongs to the reaction center PufL/M/PsbA/D family. In terms of assembly, PSII is composed of 1 copy each of membrane proteins PsbA, PsbB, PsbC, PsbD, PsbE, PsbF, PsbH, PsbI, PsbJ, PsbK, PsbL, PsbM, PsbT, PsbX, PsbY, PsbZ, Psb30/Ycf12, at least 3 peripheral proteins of the oxygen-evolving complex and a large number of cofactors. It forms dimeric complexes. It depends on The D1/D2 heterodimer binds P680, chlorophylls that are the primary electron donor of PSII, and subsequent electron acceptors. It shares a non-heme iron and each subunit binds pheophytin, quinone, additional chlorophylls, carotenoids and lipids. D1 provides most of the ligands for the Mn4-Ca-O5 cluster of the oxygen-evolving complex (OEC). There is also a Cl(-1) ion associated with D1 and D2, which is required for oxygen evolution. The PSII complex binds additional chlorophylls, carotenoids and specific lipids. as a cofactor. Tyr-161 forms a radical intermediate that is referred to as redox-active TyrZ, YZ or Y-Z. In terms of processing, C-terminally processed by CTPA; processing is essential to allow assembly of the oxygen-evolving complex and thus photosynthetic growth.

The protein localises to the plastid. It localises to the chloroplast thylakoid membrane. The catalysed reaction is 2 a plastoquinone + 4 hnu + 2 H2O = 2 a plastoquinol + O2. In terms of biological role, photosystem II (PSII) is a light-driven water:plastoquinone oxidoreductase that uses light energy to abstract electrons from H(2)O, generating O(2) and a proton gradient subsequently used for ATP formation. It consists of a core antenna complex that captures photons, and an electron transfer chain that converts photonic excitation into a charge separation. The D1/D2 (PsbA/PsbD) reaction center heterodimer binds P680, the primary electron donor of PSII as well as several subsequent electron acceptors. This chain is Photosystem II protein D1, found in Lolium perenne (Perennial ryegrass).